We begin with the raw amino-acid sequence, 70 residues long: DNA gyrase inhibitor YacG (70 aa).

The segment covering 1–15 has biased composition (basic and acidic residues); that stretch reads MPEDKKAAAKVEPLR. The interval 1-22 is disordered; sequence MPEDKKAAAKVEPLRKTRPCPE. Zn(2+)-binding residues include cysteine 20, cysteine 23, cysteine 35, and cysteine 39.

The protein belongs to the DNA gyrase inhibitor YacG family. In terms of assembly, interacts with GyrB. Zn(2+) is required as a cofactor.

Its function is as follows. Inhibits all the catalytic activities of DNA gyrase by preventing its interaction with DNA. Acts by binding directly to the C-terminal domain of GyrB, which probably disrupts DNA binding by the gyrase. The protein is DNA gyrase inhibitor YacG of Rhizobium johnstonii (strain DSM 114642 / LMG 32736 / 3841) (Rhizobium leguminosarum bv. viciae).